Here is an 857-residue protein sequence, read N- to C-terminus: Cation/H(+) antiporter 25 (857 aa).

11 helical membrane passes run 65–85 (FSTF…VYVL), 93–110 (RIVC…SMLG), 122–142 (PIAN…FFFL), 161–181 (YIAA…GAAL), 194–214 (SIGG…YTVL), 227–247 (FAMS…VLFE), 259–279 (YSVI…LLVV), 313–333 (FLTD…GLVV), 385–405 (IYMS…AALF), 413–435 (SLTL…LHWI), and 447–467 (VMVL…SFLY). Ser855 bears the Phosphoserine mark.

The protein belongs to the monovalent cation:proton antiporter 2 (CPA2) transporter (TC 2.A.37) family. CHX (TC 2.A.37.4) subfamily. In terms of tissue distribution, specifically expressed in pollen.

It localises to the membrane. In terms of biological role, may operate as a cation/H(+) antiporter. This is Cation/H(+) antiporter 25 (CHX25) from Arabidopsis thaliana (Mouse-ear cress).